Reading from the N-terminus, the 473-residue chain is Ribosomal RNA small subunit methyltransferase F (473 aa).

S-adenosyl-L-methionine is bound by residues 123 to 129 (AAAPGSK), Glu-147, Asp-174, and Asp-192. Residue Cys-245 is the Nucleophile of the active site.

It belongs to the class I-like SAM-binding methyltransferase superfamily. RsmB/NOP family.

The protein resides in the cytoplasm. The enzyme catalyses cytidine(1407) in 16S rRNA + S-adenosyl-L-methionine = 5-methylcytidine(1407) in 16S rRNA + S-adenosyl-L-homocysteine + H(+). In terms of biological role, specifically methylates the cytosine at position 1407 (m5C1407) of 16S rRNA. The chain is Ribosomal RNA small subunit methyltransferase F from Vibrio atlanticus (strain LGP32) (Vibrio splendidus (strain Mel32)).